A 203-amino-acid polypeptide reads, in one-letter code: Orotate phosphoribosyltransferase (203 aa).

5-phospho-alpha-D-ribose 1-diphosphate-binding positions include Arg-94, Lys-98, His-100, and 120–128; that span reads EDLISTGGS. An orotate-binding site is contributed by Ser-124.

It belongs to the purine/pyrimidine phosphoribosyltransferase family. PyrE subfamily. Homodimer. Mg(2+) is required as a cofactor.

The catalysed reaction is orotidine 5'-phosphate + diphosphate = orotate + 5-phospho-alpha-D-ribose 1-diphosphate. It functions in the pathway pyrimidine metabolism; UMP biosynthesis via de novo pathway; UMP from orotate: step 1/2. Its function is as follows. Catalyzes the transfer of a ribosyl phosphate group from 5-phosphoribose 1-diphosphate to orotate, leading to the formation of orotidine monophosphate (OMP). In Staphylococcus epidermidis (strain ATCC 35984 / DSM 28319 / BCRC 17069 / CCUG 31568 / BM 3577 / RP62A), this protein is Orotate phosphoribosyltransferase.